The sequence spans 120 residues: Large ribosomal subunit protein uL22 (120 aa).

This sequence belongs to the universal ribosomal protein uL22 family. In terms of assembly, part of the 50S ribosomal subunit.

Its function is as follows. This protein binds specifically to 23S rRNA; its binding is stimulated by other ribosomal proteins, e.g. L4, L17, and L20. It is important during the early stages of 50S assembly. It makes multiple contacts with different domains of the 23S rRNA in the assembled 50S subunit and ribosome. Functionally, the globular domain of the protein is located near the polypeptide exit tunnel on the outside of the subunit, while an extended beta-hairpin is found that lines the wall of the exit tunnel in the center of the 70S ribosome. The sequence is that of Large ribosomal subunit protein uL22 from Acaryochloris marina (strain MBIC 11017).